The chain runs to 174 residues: Beta-lactoglobulin (174 aa).

The N-terminal stretch at 1-18 is a signal peptide; that stretch reads MKFLLLTVGLTSICAIQA. Disulfide bonds link cysteine 79–cysteine 172 and cysteine 122–cysteine 134.

This sequence belongs to the calycin superfamily. Lipocalin family. As to quaternary structure, monomer.

It is found in the secreted. Functionally, lactoglobulin is the primary component of whey, it binds retinol and is probably involved in the transport of that molecule. The chain is Beta-lactoglobulin (LGB) from Trichosurus vulpecula (Brush-tailed possum).